Reading from the N-terminus, the 103-residue chain is NADH-quinone oxidoreductase subunit K (103 aa).

Helical transmembrane passes span 6-26, 30-50, and 66-86; these read IEYYLVVAAVLFLIGSIGFLL, LLVLLMSIELMLNAVNLTLVA, and FFVIAIAAAEAAVGLAIVLAF.

The protein belongs to the complex I subunit 4L family. As to quaternary structure, NDH-1 is composed of 14 different subunits. Subunits NuoA, H, J, K, L, M, N constitute the membrane sector of the complex.

The protein localises to the cell inner membrane. The catalysed reaction is a quinone + NADH + 5 H(+)(in) = a quinol + NAD(+) + 4 H(+)(out). Its function is as follows. NDH-1 shuttles electrons from NADH, via FMN and iron-sulfur (Fe-S) centers, to quinones in the respiratory chain. The immediate electron acceptor for the enzyme in this species is believed to be ubiquinone. Couples the redox reaction to proton translocation (for every two electrons transferred, four hydrogen ions are translocated across the cytoplasmic membrane), and thus conserves the redox energy in a proton gradient. The polypeptide is NADH-quinone oxidoreductase subunit K (Sorangium cellulosum (strain So ce56) (Polyangium cellulosum (strain So ce56))).